We begin with the raw amino-acid sequence, 126 residues long: Aspartate 1-decarboxylase (126 aa).

Ser-25 functions as the Schiff-base intermediate with substrate; via pyruvic acid in the catalytic mechanism. The residue at position 25 (Ser-25) is a Pyruvic acid (Ser). Thr-57 is a binding site for substrate. Residue Tyr-58 is the Proton donor of the active site. Position 73–75 (Gly-73–Ala-75) interacts with substrate.

The protein belongs to the PanD family. As to quaternary structure, heterooctamer of four alpha and four beta subunits. It depends on pyruvate as a cofactor. Post-translationally, is synthesized initially as an inactive proenzyme, which is activated by self-cleavage at a specific serine bond to produce a beta-subunit with a hydroxyl group at its C-terminus and an alpha-subunit with a pyruvoyl group at its N-terminus.

It localises to the cytoplasm. It carries out the reaction L-aspartate + H(+) = beta-alanine + CO2. The protein operates within cofactor biosynthesis; (R)-pantothenate biosynthesis; beta-alanine from L-aspartate: step 1/1. Functionally, catalyzes the pyruvoyl-dependent decarboxylation of aspartate to produce beta-alanine. The sequence is that of Aspartate 1-decarboxylase from Edwardsiella ictaluri (strain 93-146).